Reading from the N-terminus, the 293-residue chain is Probable 2-(5''-triphosphoribosyl)-3'-dephosphocoenzyme-A synthase (293 aa).

The protein belongs to the CitG/MdcB family.

The enzyme catalyses 3'-dephospho-CoA + ATP = 2'-(5''-triphospho-alpha-D-ribosyl)-3'-dephospho-CoA + adenine. In terms of biological role, involved in the formation of 2-(5''-phosphoribosyl)-3'-dephosphocoenzyme-A, the prosthetic group of the acyl-carrier protein of the malonate decarboxylase. This chain is Probable 2-(5''-triphosphoribosyl)-3'-dephosphocoenzyme-A synthase, found in Pseudomonas aeruginosa (strain UCBPP-PA14).